Reading from the N-terminus, the 834-residue chain is Protein kintoun (834 aa).

Disordered regions lie at residues 214–239, 374–415, 547–669, and 759–834; these read TAEEQEPHPLAHMFPTKPPAPGKQEP, SRED…SVAP, KGKV…STGR, and KKNQ…EMDD. Position 378 is a phosphoserine (serine 378). Residues 389 to 398 are compositionally biased toward acidic residues; it reads PVEEDPDGEL. Residues 552 to 571 show a composition bias toward basic and acidic residues; it reads AKKDNAPLDVKFERNQEGHA. Residues 582 to 596 show a composition bias toward acidic residues; sequence EEEEDKENQDQEPES. The span at 597–607 shows a compositional bias: low complexity; it reads DQQQQQQVQNK. Basic residues-rich tracts occupy residues 608–619 and 759–773; these read KPGKKQRKKNKK and KKNQKRRDLKLRAQQ. Serine 777 is modified (phosphoserine). The span at 785 to 798 shows a compositional bias: basic and acidic residues; it reads EETRGSALKQEENP.

The protein belongs to the PIH1 family. Kintoun subfamily. Interacts with Pp1alpha-96A, Pp1-87B, Pp1-13C and flw.

Its subcellular location is the cytoplasm. Functionally, required for cytoplasmic pre-assembly of axonemal dyneins, thereby playing a central role in motility in cilia and flagella. Involved in pre-assembly of dynein arm complexes in the cytoplasm before intraflagellar transport loads them for the ciliary compartment. The polypeptide is Protein kintoun (Drosophila melanogaster (Fruit fly)).